Here is a 103-residue protein sequence, read N- to C-terminus: MGFYGNLNHMEKRKSGYVTQKQFNDFKNSNNQRLIKIENTLVSQGEQISQLIKVSILQGEQINKLTETVEKQGEQIQTQGETLKLILETLQVINKRLDRLESK.

It belongs to the UPF0134 family.

This is UPF0134 protein MPN_484 from Mycoplasma pneumoniae (strain ATCC 29342 / M129 / Subtype 1) (Mycoplasmoides pneumoniae).